Here is a 277-residue protein sequence, read N- to C-terminus: Large ribosomal subunit protein uL2 (277 aa).

Disordered stretches follow at residues 38-58 and 219-277; these read HRKG…GGGH and TVRG…RKNK.

The protein belongs to the universal ribosomal protein uL2 family. In terms of assembly, part of the 50S ribosomal subunit. Forms a bridge to the 30S subunit in the 70S ribosome.

Functionally, one of the primary rRNA binding proteins. Required for association of the 30S and 50S subunits to form the 70S ribosome, for tRNA binding and peptide bond formation. It has been suggested to have peptidyltransferase activity; this is somewhat controversial. Makes several contacts with the 16S rRNA in the 70S ribosome. The sequence is that of Large ribosomal subunit protein uL2 from Bacillus pumilus (strain SAFR-032).